Consider the following 145-residue polypeptide: Putative antiporter subunit mnhG2 (145 aa).

3 helical membrane-spanning segments follow: residues 11–31 (IAAVMLLLGSFIALISAIGIV), 51–71 (VLLTLIGVLIYFIVNTGFFSV), and 72–92 (RLLLSLVFINLTSPVGMHLVA).

Belongs to the CPA3 antiporters (TC 2.A.63) subunit G family. As to quaternary structure, may form a heterooligomeric complex that consists of seven subunits: mnhA2, mnhB2, mnhC2, mnhD2, mnhE2, mnhF2 and mnhG2.

The protein resides in the cell membrane. The polypeptide is Putative antiporter subunit mnhG2 (mnhG2) (Staphylococcus aureus (strain bovine RF122 / ET3-1)).